The chain runs to 588 residues: Adenine deaminase (588 aa).

This sequence belongs to the metallo-dependent hydrolases superfamily. Adenine deaminase family. Homodimer. Mn(2+) serves as cofactor.

It carries out the reaction adenine + H2O + H(+) = hypoxanthine + NH4(+). The sequence is that of Adenine deaminase from Shigella boydii serotype 4 (strain Sb227).